The sequence spans 318 residues: Olfactory receptor 2A2 (318 aa).

Over 1 to 24 (MEGNQTWITDITLLGFQVGPALAI) the chain is Extracellular. The N-linked (GlcNAc...) asparagine glycan is linked to N4. A helical transmembrane segment spans residues 25 to 48 (LLCGLFSVFYTLTLLGNGVIFGII). Residues 49 to 56 (CLDSKLHT) lie on the Cytoplasmic side of the membrane. The helical transmembrane segment at 57-78 (PMYFFLSHLAIIDMSYASNNVP) threads the bilayer. Residues 79–99 (KMLANLMNQKRTISFVPCIMQ) lie on the Extracellular side of the membrane. A helical transmembrane segment spans residues 100 to 119 (TFLYLAFAVTECLILVVMSY). Topologically, residues 120 to 138 (DRYVAICHPFQYTVIMSWR) are cytoplasmic. A helical transmembrane segment spans residues 139–157 (VCTILVLTSWSCGFALSLV). At 158–194 (HEILLLRLPFCGPRDVNHLFCEILSVLKLACADTWVN) the chain is on the extracellular side. The chain crosses the membrane as a helical span at residues 195-218 (QVVIFATCVFVLVGPLSLILVSYM). The Cytoplasmic portion of the chain corresponds to 219–235 (HILGAILKIQTKEGRIK). Residues 236 to 258 (AFSTCSSHLCVVGLFFGIAMVVY) traverse the membrane as a helical segment. Topologically, residues 259 to 271 (MVPDSNQREEQEK) are extracellular. Residues 272–291 (MLSLFHSVFNPMLNPLIYSL) form a helical membrane-spanning segment. At 292–310 (RNAQLKGALHRALQRKRSM) the chain is on the cytoplasmic side.

It belongs to the G-protein coupled receptor 1 family.

It is found in the cell membrane. Odorant receptor. This is Olfactory receptor 2A2 (OR2A2) from Homo sapiens (Human).